A 209-amino-acid chain; its full sequence is Imidazoleglycerol-phosphate dehydratase (209 aa).

It belongs to the imidazoleglycerol-phosphate dehydratase family.

It is found in the cytoplasm. The enzyme catalyses D-erythro-1-(imidazol-4-yl)glycerol 3-phosphate = 3-(imidazol-4-yl)-2-oxopropyl phosphate + H2O. It functions in the pathway amino-acid biosynthesis; L-histidine biosynthesis; L-histidine from 5-phospho-alpha-D-ribose 1-diphosphate: step 6/9. The protein is Imidazoleglycerol-phosphate dehydratase of Microcystis aeruginosa (strain NIES-843 / IAM M-2473).